Reading from the N-terminus, the 347-residue chain is Heat-inducible transcription repressor HrcA (347 aa).

The protein belongs to the HrcA family.

Functionally, negative regulator of class I heat shock genes (grpE-dnaK-dnaJ and groELS operons). Prevents heat-shock induction of these operons. This chain is Heat-inducible transcription repressor HrcA, found in Nocardia farcinica (strain IFM 10152).